We begin with the raw amino-acid sequence, 257 residues long: MVLIRVLANLLILQLSYAQKSSELVIGGDECNINEHPFLVLVYYDDYQCGGTLINEEWVLTAAHCNGENMEIYLGMHSKKVPNKDRRRRVPKEKFFCDSSKTYTKWNKDIMLIRLDRPVRKSAHIAPLSLPSSPPSVGSVCRVMGWGTITSPQVTLPDVPRCANINLLDYEVCRAAYPELPATSRTLCAGILEGGKDSCGGDSGGPLICNGQFQGIVSWGGDPCAQPHEPGLYTNVFDHLDWIKGFIAGNTDVTCPP.

The first 18 residues, 1–18, serve as a signal peptide directing secretion; sequence MVLIRVLANLLILQLSYA. Positions 19 to 24 are excised as a propeptide; sequence QKSSEL. The Peptidase S1 domain occupies 25–248; sequence VIGGDECNIN…HLDWIKGFIA (224 aa). Cystine bridges form between C31–C162, C49–C65, C97–C255, C141–C209, C173–C188, and C199–C224. Catalysis depends on charge relay system residues H64 and D109. Catalysis depends on S203, which acts as the Charge relay system.

It belongs to the peptidase S1 family. Snake venom subfamily. As to quaternary structure, monomer. As to expression, expressed by the venom gland.

The protein resides in the secreted. In terms of biological role, snake venom serine protease with fibrinogenolytic activities. Cleaves beta-chain of fibrinogen (FGB) efficiently and shows relatively lower activity on alpha-chain. This Protobothrops mucrosquamatus (Taiwan habu) protein is Beta-fibrinogenase mucrofibrase-4.